The following is an 80-amino-acid chain: Translation initiation factor IF-1, chloroplastic (80 aa).

Positions Met-1–Arg-72 constitute an S1-like domain.

Belongs to the IF-1 family. In terms of assembly, component of the 30S ribosomal translation pre-initiation complex which assembles on the 30S ribosome in the order IF-2 and IF-3, IF-1 and N-formylmethionyl-tRNA(fMet); mRNA recruitment can occur at any time during PIC assembly.

The protein localises to the plastid. Its subcellular location is the chloroplast. Its function is as follows. One of the essential components for the initiation of protein synthesis. Stabilizes the binding of IF-2 and IF-3 on the 30S subunit to which N-formylmethionyl-tRNA(fMet) subsequently binds. Helps modulate mRNA selection, yielding the 30S pre-initiation complex (PIC). Upon addition of the 50S ribosomal subunit IF-1, IF-2 and IF-3 are released leaving the mature 70S translation initiation complex. This chain is Translation initiation factor IF-1, chloroplastic, found in Adiantum capillus-veneris (Maidenhair fern).